Here is a 287-residue protein sequence, read N- to C-terminus: Lipoyl synthase (287 aa).

C34, C39, C45, C60, C64, C67, and S273 together coordinate [4Fe-4S] cluster. The 217-residue stretch at W46–L262 folds into the Radical SAM core domain.

The protein belongs to the radical SAM superfamily. Lipoyl synthase family. It depends on [4Fe-4S] cluster as a cofactor.

It is found in the cytoplasm. It carries out the reaction [[Fe-S] cluster scaffold protein carrying a second [4Fe-4S](2+) cluster] + N(6)-octanoyl-L-lysyl-[protein] + 2 oxidized [2Fe-2S]-[ferredoxin] + 2 S-adenosyl-L-methionine + 4 H(+) = [[Fe-S] cluster scaffold protein] + N(6)-[(R)-dihydrolipoyl]-L-lysyl-[protein] + 4 Fe(3+) + 2 hydrogen sulfide + 2 5'-deoxyadenosine + 2 L-methionine + 2 reduced [2Fe-2S]-[ferredoxin]. Its pathway is protein modification; protein lipoylation via endogenous pathway; protein N(6)-(lipoyl)lysine from octanoyl-[acyl-carrier-protein]: step 2/2. Its function is as follows. Catalyzes the radical-mediated insertion of two sulfur atoms into the C-6 and C-8 positions of the octanoyl moiety bound to the lipoyl domains of lipoate-dependent enzymes, thereby converting the octanoylated domains into lipoylated derivatives. The polypeptide is Lipoyl synthase (Wolbachia pipientis wMel).